Reading from the N-terminus, the 123-residue chain is Chaperone protein SycN (123 aa).

Interacts with YscB to form a complex which specifically binds to YopN.

The protein localises to the cytoplasm. Its subcellular location is the cell inner membrane. Functionally, functions as a specific chaperone for YopN. It could facilitate the secretion and the subsequent translocation of YopN. The sequence is that of Chaperone protein SycN (sycN) from Yersinia enterocolitica.